We begin with the raw amino-acid sequence, 1164 residues long: Phospholipid-transporting ATPase IA (1164 aa).

At 1-65 the chain is on the cytoplasmic side; sequence MPTMRRTVSE…TAKYNIITFL (65 aa). Serine 25 is subject to Phosphoserine. Phosphothreonine is present on threonine 28. Residue serine 29 is modified to Phosphoserine. The helical transmembrane segment at 66–86 threads the bilayer; sequence PRFLYSQFRRAANSFFLFIAL. The Exoplasmic loop segment spans residues 87–92; that stretch reads LQQIPD. The chain crosses the membrane as a helical span at residues 93–115; it reads VSPTGRYTTLVPLLFILAVAAIK. Residues 116–297 are Cytoplasmic-facing; the sequence is EIIEDIKRHK…SNVERITNVQ (182 aa). A helical transmembrane segment spans residues 298-319; sequence ILILFCILIAMSLVCSVGSAIW. Residues 320-344 are Exoplasmic loop-facing; the sequence is NRRHSGKDWYLNLNYGGASNFGLNF. The helical transmembrane segment at 345 to 366 threads the bilayer; the sequence is LTFIILFNNLIPISLLVTLEVV. Residues 367 to 857 are Cytoplasmic-facing; it reads KFTQAYFINW…GAWNYNRVSK (491 aa). Residue aspartate 409 is the 4-aspartylphosphate intermediate of the active site. Positions 409, 410, and 411 each coordinate ATP. Aspartate 409 lines the Mg(2+) pocket. Threonine 411 serves as a coordination point for Mg(2+). Residue serine 443 is modified to Phosphoserine. Residues glutamate 508, phenylalanine 549, lysine 572, arginine 605, threonine 685, glycine 686, aspartate 687, 741–748, arginine 775, and lysine 781 contribute to the ATP site; that span reads ALIIDGKT. Residue aspartate 801 coordinates Mg(2+). Residues asparagine 804 and aspartate 805 each coordinate ATP. Aspartate 805 provides a ligand contact to Mg(2+). A helical transmembrane segment spans residues 858 to 878; it reads CILYCFYKNIVLYIIEIWFAF. The Exoplasmic loop segment spans residues 879 to 890; sequence VNGFSGQILFER. The helical transmembrane segment at 891 to 910 threads the bilayer; sequence WCIGLYNVMFTAMPPLTLGI. The Cytoplasmic segment spans residues 911–940; the sequence is FERSCRKENMLKYPELYKTSQNALDFNTKV. Residues 941 to 962 traverse the membrane as a helical segment; it reads FWVHCLNGLFHSVILFWFPLKA. Over 963–976 the chain is Exoplasmic loop; sequence LQYGTAFGNGKTSD. The chain crosses the membrane as a helical span at residues 977–999; the sequence is YLLLGNFVYTFVVITVCLKAGLE. Residues 1000-1005 lie on the Cytoplasmic side of the membrane; it reads TSYWTW. Residues 1006–1026 form a helical membrane-spanning segment; that stretch reads FSHIAIWGSIALWVVFFGIYS. Topologically, residues 1027 to 1044 are exoplasmic loop; the sequence is SLWPAIPMAPDMSGEAAM. A helical transmembrane segment spans residues 1045-1070; the sequence is LFSSGVFWMGLLFIPVASLLLDVVYK. Topologically, residues 1071-1164 are cytoplasmic; it reads VIKRTAFKTL…DTTKQRPDEW (94 aa). Residue 1095–1102 coordinates ATP; it reads GAVVLGKS. Phosphoserine is present on serine 1126.

It belongs to the cation transport ATPase (P-type) (TC 3.A.3) family. Type IV subfamily. In terms of assembly, component of a P4-ATPase flippase complex which consists of a catalytic alpha subunit and an accessory beta subunit. Interacts with TMEM30A to form a flippase complex; this complex forms an intermediate phosphoenzyme. Interacts with TMEM30B; this interaction is reported conflictingly. Mg(2+) serves as cofactor. Post-translationally, cleaved by calpain in a caspase- and calcium influx-dependent manner during platelet apoptosis leading to a 100 kDa polypeptide. In terms of tissue distribution, found in most adult tissues except liver, testis and placenta. Most abundant in heart, brain and skeletal muscle. Also detected in fetal tissues. Isoform 1 is only detected in brain, skeletal muscle and heart and is the most abundant form in skeletal muscle. Highly expressed in platelets.

The protein localises to the cytoplasmic vesicle. Its subcellular location is the secretory vesicle. The protein resides in the chromaffin granule membrane. It localises to the cytoplasmic granule. It is found in the cell membrane. The protein localises to the endoplasmic reticulum. Its subcellular location is the golgi apparatus. The enzyme catalyses ATP + H2O + phospholipidSide 1 = ADP + phosphate + phospholipidSide 2.. The catalysed reaction is a 1,2-diacyl-sn-glycero-3-phospho-L-serine(out) + ATP + H2O = a 1,2-diacyl-sn-glycero-3-phospho-L-serine(in) + ADP + phosphate + H(+). With respect to regulation, ATPase activity is stimulated by phosphatidylserine (PS) and minimally by phosphatidylethanolamine (PE). ATPase activity is inhibited by beryllium fluoride and aluminum trifluoride. In terms of biological role, catalytic component of a P4-ATPase flippase complex which catalyzes the hydrolysis of ATP coupled to the transport of aminophospholipids from the outer to the inner leaflet of various membranes and ensures the maintenance of asymmetric distribution of phospholipids. Phospholipid translocation also seems to be implicated in vesicle formation and in uptake of lipid signaling molecules. In vitro, its ATPase activity is selectively and stereospecifically stimulated by phosphatidylserine (PS). The flippase complex ATP8A1:TMEM30A seems to play a role in regulation of cell migration probably involving flippase-mediated translocation of phosphatidylethanolamine (PE) at the cell membrane. Acts as aminophospholipid translocase at the cell membrane in neuronal cells. The sequence is that of Phospholipid-transporting ATPase IA from Homo sapiens (Human).